A 342-amino-acid polypeptide reads, in one-letter code: Phosphate acyltransferase (342 aa).

Belongs to the PlsX family. As to quaternary structure, homodimer. Probably interacts with PlsY.

It is found in the cytoplasm. It carries out the reaction a fatty acyl-[ACP] + phosphate = an acyl phosphate + holo-[ACP]. It functions in the pathway lipid metabolism; phospholipid metabolism. Functionally, catalyzes the reversible formation of acyl-phosphate (acyl-PO(4)) from acyl-[acyl-carrier-protein] (acyl-ACP). This enzyme utilizes acyl-ACP as fatty acyl donor, but not acyl-CoA. This Alkalilimnicola ehrlichii (strain ATCC BAA-1101 / DSM 17681 / MLHE-1) protein is Phosphate acyltransferase.